The sequence spans 73 residues: Small ribosomal subunit protein bS18 (73 aa).

This sequence belongs to the bacterial ribosomal protein bS18 family. Part of the 30S ribosomal subunit. Forms a tight heterodimer with protein bS6.

Functionally, binds as a heterodimer with protein bS6 to the central domain of the 16S rRNA, where it helps stabilize the platform of the 30S subunit. This Prochlorococcus marinus (strain NATL2A) protein is Small ribosomal subunit protein bS18.